The sequence spans 108 residues: Structural protein 1 (108 aa).

Over 1–77 the chain is Intravirion; it reads MSRVSEYGVP…LKMQMDRLCN (77 aa). A helical; Signal-anchor for type II membrane protein membrane pass occupies residues 78-98; the sequence is VLGVVLQMATLALVTYIAFVV. Residues 99–108 lie on the Virion surface side of the membrane; that stretch reads HTRATSCKRE.

Belongs to the varicellovirus ORF1 protein family. In terms of assembly, homodimer. Post-translationally, phosphorylated.

Its subcellular location is the virion membrane. It localises to the host Golgi apparatus membrane. The polypeptide is Structural protein 1 (Homo sapiens (Human)).